A 301-amino-acid polypeptide reads, in one-letter code: Methionyl-tRNA formyltransferase (301 aa).

Residue 109–112 (SLLP) participates in (6S)-5,6,7,8-tetrahydrofolate binding.

The protein belongs to the Fmt family.

The catalysed reaction is L-methionyl-tRNA(fMet) + (6R)-10-formyltetrahydrofolate = N-formyl-L-methionyl-tRNA(fMet) + (6S)-5,6,7,8-tetrahydrofolate + H(+). Its function is as follows. Attaches a formyl group to the free amino group of methionyl-tRNA(fMet). The formyl group appears to play a dual role in the initiator identity of N-formylmethionyl-tRNA by promoting its recognition by IF2 and preventing the misappropriation of this tRNA by the elongation apparatus. This Anaplasma marginale (strain St. Maries) protein is Methionyl-tRNA formyltransferase.